We begin with the raw amino-acid sequence, 370 residues long: GTPase Obg (370 aa).

The Obg domain occupies 1–159 (MKFIDEARIE…RKLKLELKVL (159 aa)). A disordered region spans residues 129–148 (HFKSSTNRAPRQKTNGKSGE). Residues 130-145 (FKSSTNRAPRQKTNGK) are compositionally biased toward polar residues. One can recognise an OBG-type G domain in the interval 160 to 334 (ADVGLLGMPN…LCYSLQDYLD (175 aa)). Residues 166–173 (GMPNAGKS), 191–195 (FTTLH), 213–216 (DIPG), 284–287 (NKVD), and 315–317 (SAL) each bind GTP. Mg(2+) is bound by residues Ser-173 and Thr-193.

This sequence belongs to the TRAFAC class OBG-HflX-like GTPase superfamily. OBG GTPase family. As to quaternary structure, monomer. Mg(2+) serves as cofactor.

The protein localises to the cytoplasm. Its function is as follows. An essential GTPase which binds GTP, GDP and possibly (p)ppGpp with moderate affinity, with high nucleotide exchange rates and a fairly low GTP hydrolysis rate. Plays a role in control of the cell cycle, stress response, ribosome biogenesis and in those bacteria that undergo differentiation, in morphogenesis control. The sequence is that of GTPase Obg from Polynucleobacter necessarius subsp. necessarius (strain STIR1).